Here is a 606-residue protein sequence, read N- to C-terminus: Methionine--tRNA ligase (606 aa).

The 'HIGH' region signature appears at 14–24 (PYANGPRHIGH). 4 residues coordinate Zn(2+): cysteine 146, cysteine 149, cysteine 159, and cysteine 162. Positions 351 to 355 (KFSSS) match the 'KMSKS' region motif. Serine 354 is a binding site for ATP.

This sequence belongs to the class-I aminoacyl-tRNA synthetase family. MetG type 1 subfamily. As to quaternary structure, monomer. The cofactor is Zn(2+).

The protein localises to the cytoplasm. The enzyme catalyses tRNA(Met) + L-methionine + ATP = L-methionyl-tRNA(Met) + AMP + diphosphate. In terms of biological role, is required not only for elongation of protein synthesis but also for the initiation of all mRNA translation through initiator tRNA(fMet) aminoacylation. This chain is Methionine--tRNA ligase, found in Thermobifida fusca (strain YX).